Consider the following 60-residue polypeptide: Large ribosomal subunit protein uL30 (60 aa).

The protein belongs to the universal ribosomal protein uL30 family. As to quaternary structure, part of the 50S ribosomal subunit.

The sequence is that of Large ribosomal subunit protein uL30 from Streptococcus thermophilus (strain CNRZ 1066).